The chain runs to 353 residues: Quinolinate synthase (353 aa).

2 residues coordinate iminosuccinate: His-47 and Ser-68. Cys-113 lines the [4Fe-4S] cluster pocket. Residues 139-141 and Ser-156 contribute to the iminosuccinate site; that span reads YAN. Residue Cys-200 participates in [4Fe-4S] cluster binding. Iminosuccinate-binding positions include 226–228 and Thr-243; that span reads HPE. Cys-297 provides a ligand contact to [4Fe-4S] cluster.

It belongs to the quinolinate synthase family. Type 1 subfamily. It depends on [4Fe-4S] cluster as a cofactor.

It localises to the cytoplasm. The enzyme catalyses iminosuccinate + dihydroxyacetone phosphate = quinolinate + phosphate + 2 H2O + H(+). Its pathway is cofactor biosynthesis; NAD(+) biosynthesis; quinolinate from iminoaspartate: step 1/1. Catalyzes the condensation of iminoaspartate with dihydroxyacetone phosphate to form quinolinate. In Vibrio campbellii (strain ATCC BAA-1116), this protein is Quinolinate synthase.